The primary structure comprises 290 residues: Dihydroorotate dehydrogenase B (NAD(+)), catalytic subunit (290 aa).

Residues S17 and 42–43 (KT) contribute to the FMN site. Substrate contacts are provided by residues K42, 67 to 71 (NAIGL), and N117. N117 provides a ligand contact to FMN. S120 (nucleophile) is an active-site residue. FMN is bound by residues K152 and I177. Residue 178–179 (NT) coordinates substrate. Residues G203, 229-230 (GG), and 251-252 (GT) each bind FMN.

It belongs to the dihydroorotate dehydrogenase family. Type 1 subfamily. As to quaternary structure, heterotetramer of 2 PyrK and 2 PyrD type B subunits. It depends on FMN as a cofactor.

It localises to the cytoplasm. It carries out the reaction (S)-dihydroorotate + NAD(+) = orotate + NADH + H(+). The protein operates within pyrimidine metabolism; UMP biosynthesis via de novo pathway; orotate from (S)-dihydroorotate (NAD(+) route): step 1/1. Catalyzes the conversion of dihydroorotate to orotate with NAD(+) as electron acceptor. This is Dihydroorotate dehydrogenase B (NAD(+)), catalytic subunit (pyrD) from Saccharolobus solfataricus (strain ATCC 35092 / DSM 1617 / JCM 11322 / P2) (Sulfolobus solfataricus).